The primary structure comprises 900 residues: Suppressor of activated egl-4 protein 1 (900 aa).

3 disordered regions span residues 1–75 (MPPP…HLPT), 340–380 (PVAE…SRKN), and 406–425 (WAST…ESLE). A compositionally biased stretch (polar residues) spans 53–75 (ASGQQHRPSIMSGQSHQNNHLPT). 2 stretches are compositionally biased toward basic and acidic residues: residues 358-377 (GDMK…DGPS) and 412-425 (ADEK…ESLE). The ELM2 domain occupies 451-544 (PHINLGKNYQ…AAVEDLLRSD (94 aa)). One can recognise an SANT domain in the interval 560-611 (NDSVLWTPDEIYQFQDAIYQSEKDFDKVAVELPGKSVKECVQFYYTWKKDCP). A disordered region spans residues 710–729 (PTAPRAHHTPSASASKKGAQ). The C2H2-type zinc finger occupies 736–758 (FHCRLCDKCFEKVKSLNAHMKSH).

As to quaternary structure, may be a component of a histone deacetylase complex containing saeg-2, saeg-1 and hda-2. May interact with egl-4. Ubiquitously expressed.

It localises to the nucleus. As a likely component of a histone deacetylase complex, together with saeg-2 and hda-2, functions downstream of the cAMP-dependent kinase egl-4 to regulate the expression of genes required for egg-laying and foraging. The protein is Suppressor of activated egl-4 protein 1 of Caenorhabditis elegans.